The primary structure comprises 394 residues: Probable cytosolic iron-sulfur protein assembly protein 1 (394 aa).

WD repeat units follow at residues Ala10–Leu49, Ala56–Ser108, Gly144–Glu184, Asp191–Ser230, Gly237–Ile284, Ile313–Ile352, and Ala359–Pro394.

It belongs to the WD repeat CIA1 family. Interacts with NAR1.

Its subcellular location is the cytoplasm. It localises to the nucleus. Functionally, essential component of the cytosolic iron-sulfur (Fe/S) protein assembly machinery. Required for the maturation of extramitochondrial Fe/S proteins. This is Probable cytosolic iron-sulfur protein assembly protein 1 from Debaryomyces hansenii (strain ATCC 36239 / CBS 767 / BCRC 21394 / JCM 1990 / NBRC 0083 / IGC 2968) (Yeast).